Here is a 347-residue protein sequence, read N- to C-terminus: UDP-3-O-acylglucosamine N-acyltransferase (347 aa).

Catalysis depends on H242, which acts as the Proton acceptor.

This sequence belongs to the transferase hexapeptide repeat family. LpxD subfamily. As to quaternary structure, homotrimer.

It catalyses the reaction a UDP-3-O-[(3R)-3-hydroxyacyl]-alpha-D-glucosamine + a (3R)-hydroxyacyl-[ACP] = a UDP-2-N,3-O-bis[(3R)-3-hydroxyacyl]-alpha-D-glucosamine + holo-[ACP] + H(+). Its pathway is bacterial outer membrane biogenesis; LPS lipid A biosynthesis. In terms of biological role, catalyzes the N-acylation of UDP-3-O-acylglucosamine using 3-hydroxyacyl-ACP as the acyl donor. Is involved in the biosynthesis of lipid A, a phosphorylated glycolipid that anchors the lipopolysaccharide to the outer membrane of the cell. The protein is UDP-3-O-acylglucosamine N-acyltransferase of Dechloromonas aromatica (strain RCB).